Reading from the N-terminus, the 78-residue chain is Hainantoxin-XX (78 aa).

A signal peptide spans 1 to 23; that stretch reads MKSATLLALSFLLIALYFLICEA. A propeptide spanning residues 24–47 is cleaved from the precursor; it reads EHSRYEEHEILEENMGDVVNLEQR. 3 cysteine pairs are disulfide-bonded: Cys-49-Cys-62, Cys-56-Cys-66, and Cys-61-Cys-77.

It belongs to the hainantoxin family. 20 subfamily. As to expression, expressed by the venom gland.

The protein localises to the secreted. Functionally, putative ion channel inhibitor. The polypeptide is Hainantoxin-XX (Cyriopagopus hainanus (Chinese bird spider)).